Consider the following 489-residue polypeptide: Aklavinone 12-hydroxylase DnrF (489 aa).

FAD-binding positions include 17–18 (LG), Glu37, Gln121, and Leu145. Residue Tyr224 is the Proton acceptor of the active site. An FAD-binding site is contributed by Asp308. Gly317 serves as a coordination point for aklavinone. Disordered regions lie at residues 402 to 428 (VAAE…RAPH) and 455 to 489 (EGGA…PPAN). Positions 468-482 (RIWASASTSISSAAM) are enriched in low complexity.

This sequence belongs to the PheA/TfdB FAD monooxygenase family. Monomer. FAD serves as cofactor.

It carries out the reaction aklavinone + NADPH + O2 + H(+) = epsilon-rhodomycinone + NADP(+) + H2O. It functions in the pathway antibiotic biosynthesis; daunorubicin biosynthesis. The protein operates within antibiotic biosynthesis; carminomycin biosynthesis. It participates in antibiotic biosynthesis; rhodomycin biosynthesis. Functionally, involved in the biosynthesis of the anthracyclines carminomycin, rhodomycin and daunorubicin (daunomycin) which are aromatic polyketide antibiotics that exhibit high cytotoxicity and are widely applied in the chemotherapy of a variety of cancers. Catalyzes the incorporation of a hydroxyl group at position C-11 of aklavinone, resulting in epsilon-rhodomycinone. It cannot accept substrates glycosylated at position C-7. It can also hydroxylate 11-deoxycarminomycinone and can use both NAD or NADP. The protein is Aklavinone 12-hydroxylase DnrF (dnrF) of Streptomyces peucetius.